Here is a 305-residue protein sequence, read N- to C-terminus: MACILKRKPVLVVSFIALCILLLAMRLVNDATFPLLLNCFGQPKTKWIPLPYTFRQPLRTHYGYINVRTQEPLQLNCNHCAIVSNSGQMVGQKVGEEIDHASCIWRMNNAPTKGFEEDVGYMTMVRVVSHTSVPLLLKNPDYFFKEASRTIYVIWGPFRNMRKDGNGIVYNMLKKTVDAYPDAQIYVTTEQQMTHCDRVFKDETGKDRVQSGSYLSTGWFTFILAMDACYSIHVYGMINETYCKTEGYRKVPYHYYEQGKDECNEYLLHEHAPYGGHRFITEKKVFAKWAKKHRIVFTHPNWTLS.

Residues 1 to 8 (MACILKRK) lie on the Cytoplasmic side of the membrane. Residues 9–28 (PVLVVSFIALCILLLAMRLV) form a helical; Signal-anchor for type II membrane protein membrane-spanning segment. At 29–305 (NDATFPLLLN…VFTHPNWTLS (277 aa)) the chain is on the lumenal side. An intrachain disulfide couples Cys80 to Cys229. N-linked (GlcNAc...) asparagine glycosylation is found at Asn239 and Asn301.

It belongs to the glycosyltransferase 29 family. In terms of tissue distribution, in adult tissues, high expression in brain, lung and heart and to a lesser extent in kidney, mammary gland, spleen, testis and thymus.

The protein localises to the golgi apparatus membrane. It carries out the reaction an alpha-Neu5Ac-(2-&gt;3)-beta-D-Gal-(1-&gt;3)-D-GlcNAc derivative + CMP-N-acetyl-beta-neuraminate = an alpha-Neu5Ac-(2-&gt;3)-beta-D-Gal-(1-&gt;3)-[alpha-Neu5Ac-(2-&gt;6)]-D-GlcNAc derivative + CMP + H(+). The enzyme catalyses a ganglioside GM1b (d18:1(4E)) + CMP-N-acetyl-beta-neuraminate = a ganglioside GD1alpha (d18:1(4E)) + CMP + H(+). The catalysed reaction is a globoside MSGG + CMP-N-acetyl-beta-neuraminate = a globoside DSGG + CMP + H(+). It catalyses the reaction 3-O-[alpha-Neu5Ac-(2-&gt;3)-beta-D-Gal-(1-&gt;3)-alpha-D-GalNAc]-L-Ser-[protein] + CMP-N-acetyl-beta-neuraminate = a 3-O-{alpha-Neu5Ac-(2-&gt;3)-beta-D-Gal-(1-&gt;3)-[alpha-Neu5Ac-(2-&gt;6)]-alpha-D-GalNAc}-L-seryl-[protein] + CMP + H(+). It carries out the reaction 3-O-[alpha-Neu5Ac-(2-&gt;3)-beta-D-Gal-(1-&gt;3)-alpha-D-GalNAc]-L-Thr-[protein] + CMP-N-acetyl-beta-neuraminate = a 3-O-{alpha-Neu5Ac-(2-&gt;3)-beta-D-Gal-(1-&gt;3)-[alpha-Neu5Ac-(2-&gt;6)]-alpha-D-GalNAc}-L-threonyl-[protein] + CMP + H(+). It participates in protein modification; protein glycosylation. Its pathway is glycolipid biosynthesis. Transfers the sialyl group (N-acetyl-alpha-neuraminyl or NeuAc) from CMP-NeuAc to the GalNAc residue on the NeuAc-alpha-2,3-Gal-beta-1,3-GalNAc sequence of glycoproteins and glycolipids forming an alpha-2,6-linkage. Produces branched type disialyl structures by transfer of a sialyl group onto a GalNAc residue inside the backbone core chains. ST6GalNAcIII prefers glycolipids to glycoproteins, predominantly catalyzing the biosynthesis of ganglioside GD1alpha from GM1b. GD1alpha is a critical molecule in the communication and interaction between neuronal cells and their supportive cells, particularly in brain tissues, and functions as an adhesion molecule in the process of metastasis. Sialylation of glycoproteins or glycosphingolipids is very important in tumor development, neuronal development, nerve repair, immunological processes and regulation of hormone sensitivity. In Mus musculus (Mouse), this protein is Alpha-N-acetylgalactosaminide alpha-2,6-sialyltransferase 3 (St6galnac3).